Consider the following 54-residue polypeptide: uncharacterized protein (54 aa).

The first 21 residues, 1-21 (MNSKQILSLSAFAMTIATAAA), serve as a signal peptide directing secretion. Over 22 to 29 (GNWNAGDT) the chain is Extracellular. The chain crosses the membrane as a helical span at residues 30–50 (IALLIGIAMFFVLLLALLGWI). Residues 51–54 (SRKK) lie on the Cytoplasmic side of the membrane.

It is found in the membrane. This is an uncharacterized protein from Dictyostelium discoideum (Social amoeba).